The chain runs to 348 residues: PDZ and LIM domain protein 2 (348 aa).

A PDZ domain is found at 1–84; the sequence is MALTVDVVGP…PLRLQLDRPQ (84 aa). The segment at 67–139 is disordered; that stretch reads SKIRQSPSPL…PPTSPQAPTG (73 aa). The segment covering 103 to 118 has biased composition (polar residues); the sequence is RFQSSRRTHTDSQASL. Phosphoserine occurs at positions 117, 119, and 124. Residues threonine 128 and threonine 132 each carry the phosphothreonine modification. Phosphoserine occurs at positions 133, 153, 191, 197, 198, 202, 209, and 262. The interval 165 to 202 is disordered; sequence GGRRGSRQASLSPAGDSAVLVLPPPPSPGARSSSSRLS. Residues 193 to 202 show a composition bias toward low complexity; that stretch reads GARSSSSRLS. The disordered stretch occupies residues 249 to 275; sequence ERGGTPAYLPSSLSPQSSLPTSRALAS. Over residues 257-270 the composition is skewed to low complexity; the sequence is LPSSLSPQSSLPTS. The region spanning 280 to 340 is the LIM zinc-binding domain; sequence HTCEKCNTSI…EKHARQRYSA (61 aa).

Interacts with alpha-actinins ACTN1 and ACTN4, FLNA and MYH9. Interacts (via LIM zinc-binding domain) with MKRN2.

It localises to the cytoplasm. The protein localises to the cytoskeleton. In terms of biological role, probable adapter protein located at the actin cytoskeleton that promotes cell attachment. Necessary for the migratory capacity of epithelial cells. Overexpression enhances cell adhesion to collagen and fibronectin and suppresses anchorage independent growth. May contribute to tumor cell migratory capacity. This chain is PDZ and LIM domain protein 2 (PDLIM2), found in Bos taurus (Bovine).